The chain runs to 304 residues: Glutaminase (304 aa).

Residues Ser-63, Asn-113, Glu-157, Asn-164, Tyr-188, Tyr-240, and Val-258 each coordinate substrate.

This sequence belongs to the glutaminase family. Homotetramer.

It catalyses the reaction L-glutamine + H2O = L-glutamate + NH4(+). The protein is Glutaminase of Chromobacterium violaceum (strain ATCC 12472 / DSM 30191 / JCM 1249 / CCUG 213 / NBRC 12614 / NCIMB 9131 / NCTC 9757 / MK).